The primary structure comprises 429 residues: MLGIVKMEGHETTDWSNYYQDTQEAYSSVPVSNMTQGLASMNTYMTMNPMSSSSNMTAAGSFNMSYGNSGLGAGLSPSGMSGMGAGAASAMNGMGSGVPSMGTALSPSNMNAMSAQQASMNSLSYSSMNPGMSPMAYGSSNMNRARDTKTFRRSYPHAKPPYSYISLITMAIQQAPSKMLTLSEIYQWIMDLFPYYRQNQQRWQNSIRHSLSFNDCFVKVARSPDKPGKGSYWTLHPDSGNMFENGCYLRRQKRFKCEKTQGGKGNQDGRKDHSGPSSPLQRVHGKSSQMDSSSSMSNPSSSPQALEHNGSNGEMKPQVAAGPSPLSSHQNHSTHSLAHESHIHLKGDPHYSFNHPFSINNLMSSSEQQHKLDFKAYEQALQQYSSYGGGLPGMPLGSPSMSGRGNIEPSALEPTYYQGVYSRPVLNTS.

A DNA-binding region (fork-head) is located at residues 159–253 (KPPYSYISLI…ENGCYLRRQK (95 aa)). A compositionally biased stretch (basic and acidic residues) spans 258-274 (EKTQGGKGNQDGRKDHS). Positions 258–341 (EKTQGGKGNQ…HSTHSLAHES (84 aa)) are disordered. A compositionally biased stretch (low complexity) spans 287-304 (SSQMDSSSSMSNPSSSPQ). Polar residues predominate over residues 325–336 (PLSSHQNHSTHS).

At neurula stage, expressed in the notochord but not in the neural floor plate. During tailbud stages, expressed in the neural floor plate. At stage 35, expressed in the rhombencephalon, mesencephalon, pharyngeal pouches, foregut and pronephros. At stage 44, expressed in a region of the gut on the right hand side of the embryo. Expressed in the adult lung and liver.

The protein resides in the nucleus. Functionally, probable transcription factor. The polypeptide is Forkhead box protein A1-A (foxa1-a) (Xenopus laevis (African clawed frog)).